The sequence spans 400 residues: MSDSFDRAPEQTKPQRAPPSSQDKIPQQNSESAMAKPQVVVAPVLMSKLSANAPEFYPSGYSSNYTESYEDGCEDYPTLSEYVQDFLNHLTEQPGSFETEIEQFAETLNGWVTTDDALQELVELIYQQATSIPNFSYMGARLCNYLSHHLTISPQSGNFRQLLLQRCRTEYEAKDQAAKGDEVTRKRFHAFVLFLGELYLNLEIKGTNGQVTRADILQVGLRELLNALFSNPMDDNLICAVKLLKLTGSVLEDTWKEKGKTDMEEIIQRIENVVLDANCSRDVKQMLLKLVELRSSNWGRVHATSTYREATPENDPNYFMNEPTFYTSDGVPFTAADPDYQEKYQELLEREDFFPDYEENGTDLSGAGDPYLDDIDDEMDPEIEEAYEKFCLESERKRKQ.

Residues 1–10 (MSDSFDRAPE) show a composition bias toward basic and acidic residues. The segment at 1-36 (MSDSFDRAPEQTKPQRAPPSSQDKIPQQNSESAMAK) is disordered. Residues 12–32 (TKPQRAPPSSQDKIPQQNSES) show a composition bias toward polar residues. Residues 37–64 (PQVVVAPVLMSKLSANAPEFYPSGYSSN) form a PABPC1-interacting motif-2 (PAM2) region. Residues 78–296 (TLSEYVQDFL…LLKLVELRSS (219 aa)) are PAIP1 middle domain (PAIP1M). Residues 80–297 (SEYVQDFLNH…LKLVELRSSN (218 aa)) form the MIF4G domain. The segment at 356–376 (DYEENGTDLSGAGDPYLDDID) is disordered. The tract at residues 361–400 (GTDLSGAGDPYLDDIDDEMDPEIEEAYEKFCLESERKRKQ) is PABPC1-interacting motif-1 (PAM1).

In terms of assembly, interacts with the RRM1-RRM2 and C-terminus regions of PABPC1 in a 1:1 stoichiometry. Interacts with EIF4A.

It localises to the cytoplasm. In terms of biological role, acts as a coactivator in the regulation of translation initiation of poly(A)-containing mRNAs. Its stimulatory activity on translation is mediated via its action on PABPC1. Competes with PAIP2 for binding to PABPC1. Its association with EIF4A and PABPC1 may potentiate contacts between mRNA termini. May also be involved in translationally coupled mRNA turnover. Implicated with other RNA-binding proteins in the cytoplasmic deadenylation/translational and decay interplay of the FOS mRNA mediated by the major coding-region determinant of instability (mCRD) domain. This is Polyadenylate-binding protein-interacting protein 1 (Paip1) from Mus musculus (Mouse).